We begin with the raw amino-acid sequence, 207 residues long: ATP synthase subunit delta (207 aa).

It belongs to the ATPase delta chain family. As to quaternary structure, F-type ATPases have 2 components, F(1) - the catalytic core - and F(0) - the membrane proton channel. F(1) has five subunits: alpha(3), beta(3), gamma(1), delta(1), epsilon(1). F(0) has three main subunits: a(1), b(2) and c(10-14). The alpha and beta chains form an alternating ring which encloses part of the gamma chain. F(1) is attached to F(0) by a central stalk formed by the gamma and epsilon chains, while a peripheral stalk is formed by the delta and b chains.

Its subcellular location is the cell inner membrane. Functionally, f(1)F(0) ATP synthase produces ATP from ADP in the presence of a proton or sodium gradient. F-type ATPases consist of two structural domains, F(1) containing the extramembraneous catalytic core and F(0) containing the membrane proton channel, linked together by a central stalk and a peripheral stalk. During catalysis, ATP synthesis in the catalytic domain of F(1) is coupled via a rotary mechanism of the central stalk subunits to proton translocation. This protein is part of the stalk that links CF(0) to CF(1). It either transmits conformational changes from CF(0) to CF(1) or is implicated in proton conduction. This chain is ATP synthase subunit delta, found in Psychrobacter cryohalolentis (strain ATCC BAA-1226 / DSM 17306 / VKM B-2378 / K5).